Here is a 123-residue protein sequence, read N- to C-terminus: MIQMQTMLDAADNSGARSVMCIKVLGGSHRRYAHVGDIIKVTVKEAIPRGKVKKGDVLKAVVVRTRKGVRRPDGSVIRFDRNACVLLNNNSEQPIGTRIFGPVTRELRNAKFMKIVSLAPEVL.

This sequence belongs to the universal ribosomal protein uL14 family. In terms of assembly, part of the 50S ribosomal subunit. Forms a cluster with proteins L3 and L19. In the 70S ribosome, L14 and L19 interact and together make contacts with the 16S rRNA in bridges B5 and B8.

In terms of biological role, binds to 23S rRNA. Forms part of two intersubunit bridges in the 70S ribosome. The protein is Large ribosomal subunit protein uL14 of Vibrio cholerae serotype O1 (strain ATCC 39541 / Classical Ogawa 395 / O395).